We begin with the raw amino-acid sequence, 447 residues long: tRNA-2-methylthio-N(6)-dimethylallyladenosine synthase (447 aa).

One can recognise an MTTase N-terminal domain in the interval 10–128 (KLFCISTYGC…FPEYLHRVLQ (119 aa)). Residues C19, C55, C89, C165, C169, and C172 each coordinate [4Fe-4S] cluster. Residues 151 to 382 (RKSDVKAFVT…EAINKKVVIK (232 aa)) form the Radical SAM core domain. Positions 384–447 (KEYEGKVVEV…PFSLIGEIVE (64 aa)) constitute a TRAM domain.

It belongs to the methylthiotransferase family. MiaB subfamily. As to quaternary structure, monomer. Requires [4Fe-4S] cluster as cofactor.

It is found in the cytoplasm. The enzyme catalyses N(6)-dimethylallyladenosine(37) in tRNA + (sulfur carrier)-SH + AH2 + 2 S-adenosyl-L-methionine = 2-methylsulfanyl-N(6)-dimethylallyladenosine(37) in tRNA + (sulfur carrier)-H + 5'-deoxyadenosine + L-methionine + A + S-adenosyl-L-homocysteine + 2 H(+). In terms of biological role, catalyzes the methylthiolation of N6-(dimethylallyl)adenosine (i(6)A), leading to the formation of 2-methylthio-N6-(dimethylallyl)adenosine (ms(2)i(6)A) at position 37 in tRNAs that read codons beginning with uridine. The protein is tRNA-2-methylthio-N(6)-dimethylallyladenosine synthase of Clostridium perfringens (strain SM101 / Type A).